The chain runs to 283 residues: Phosphatidylserine decarboxylase proenzyme (283 aa).

Catalysis depends on charge relay system; for autoendoproteolytic cleavage activity residues D96, H152, and S250. S250 (schiff-base intermediate with substrate; via pyruvic acid; for decarboxylase activity) is an active-site residue. Position 250 is a pyruvic acid (Ser); by autocatalysis (S250).

This sequence belongs to the phosphatidylserine decarboxylase family. PSD-B subfamily. Prokaryotic type I sub-subfamily. As to quaternary structure, heterodimer of a large membrane-associated beta subunit and a small pyruvoyl-containing alpha subunit. It depends on pyruvate as a cofactor. Post-translationally, is synthesized initially as an inactive proenzyme. Formation of the active enzyme involves a self-maturation process in which the active site pyruvoyl group is generated from an internal serine residue via an autocatalytic post-translational modification. Two non-identical subunits are generated from the proenzyme in this reaction, and the pyruvate is formed at the N-terminus of the alpha chain, which is derived from the carboxyl end of the proenzyme. The autoendoproteolytic cleavage occurs by a canonical serine protease mechanism, in which the side chain hydroxyl group of the serine supplies its oxygen atom to form the C-terminus of the beta chain, while the remainder of the serine residue undergoes an oxidative deamination to produce ammonia and the pyruvoyl prosthetic group on the alpha chain. During this reaction, the Ser that is part of the protease active site of the proenzyme becomes the pyruvoyl prosthetic group, which constitutes an essential element of the active site of the mature decarboxylase.

The protein resides in the cell membrane. It carries out the reaction a 1,2-diacyl-sn-glycero-3-phospho-L-serine + H(+) = a 1,2-diacyl-sn-glycero-3-phosphoethanolamine + CO2. It participates in phospholipid metabolism; phosphatidylethanolamine biosynthesis; phosphatidylethanolamine from CDP-diacylglycerol: step 2/2. Functionally, catalyzes the formation of phosphatidylethanolamine (PtdEtn) from phosphatidylserine (PtdSer). The protein is Phosphatidylserine decarboxylase proenzyme of Acinetobacter baumannii (strain SDF).